A 76-amino-acid polypeptide reads, in one-letter code: uncharacterized protein (76 aa).

To K.pneumoniae LtrA, E.coli YjiE, and YhcS.

This is an uncharacterized protein from Escherichia coli O6:H1 (strain CFT073 / ATCC 700928 / UPEC).